A 561-amino-acid polypeptide reads, in one-letter code: Potassium-transporting ATPase potassium-binding subunit (561 aa).

Helical transmembrane passes span 4–24 (IVMQ…PLGI), 65–85 (AVSV…VLML), 133–153 (IGLT…LFAV), 177–197 (LYIL…QGVV), 253–273 (FTNL…VVMF), 285–305 (AIMT…TISE), 380–400 (GLYG…LLVG), 417–437 (MVCL…AVAV), 484–504 (MVGA…ALYL), and 528–548 (FIGL…LPAL).

The protein belongs to the KdpA family. In terms of assembly, the system is composed of three essential subunits: KdpA, KdpB and KdpC.

It is found in the cell membrane. Part of the high-affinity ATP-driven potassium transport (or Kdp) system, which catalyzes the hydrolysis of ATP coupled with the electrogenic transport of potassium into the cytoplasm. This subunit binds the extracellular potassium ions and delivers the ions to the membrane domain of KdpB through an intramembrane tunnel. This is Potassium-transporting ATPase potassium-binding subunit from Listeria monocytogenes serotype 4a (strain HCC23).